A 270-amino-acid polypeptide reads, in one-letter code: MRLSLFLSGLAAAGSIVSAERTCGAVPPRGYEKEFSEAFAALGPEATSDLTAGITIDTYLHVLTSGTTGNIPDSQLQAQINAMNQHYGPSGVQFRLVKATRTNNANWASGRDEAGMKSALHMGTYSSLNIYFIPNLSSGLLGICYFPRANPSQTTITMDGCMVRSGTVPGGETTNYNQGKTATHEVGHFLGLYHVFSENGSCVDADMVADTPPQSKKTSGCPNSQDSCPGGGVDSIHNYMDYSYDVCMNQFTRGQASRIAQAWQAFRAGH.

Positions 1 to 19 (MRLSLFLSGLAAAGSIVSA) are cleaved as a signal peptide. N-linked (GlcNAc...) asparagine glycosylation is present at N135. H184 contacts Zn(2+). E185 is an active-site residue. Residue H188 coordinates Zn(2+). N-linked (GlcNAc...) asparagine glycosylation occurs at N199. The segment at 208–227 (VADTPPQSKKTSGCPNSQDS) is disordered. A compositionally biased stretch (polar residues) spans 212-227 (PPQSKKTSGCPNSQDS). C221 and C247 are joined by a disulfide.

Belongs to the peptidase M43B family.

It localises to the secreted. Functionally, secreted metalloproteinase that allows assimilation of proteinaceous substrates. Plays a pivotal role as a pathogenicity determinant during infections and contributes to the ability of the pathogen to persist within the mammalian host. The polypeptide is Extracellular metalloprotease MCYG_04966 (Arthroderma otae (strain ATCC MYA-4605 / CBS 113480) (Microsporum canis)).